Consider the following 291-residue polypeptide: Prolyl 4-hydroxylase 5 (291 aa).

Topologically, residues 1-22 (MASKSKQHLRYQPRKSVSRSTQ) are cytoplasmic. A helical; Signal-anchor for type II membrane protein transmembrane segment spans residues 23–43 (AFTVLILLLVVILILLGLGIL). Residues 44–291 (SLPNANRNSS…KWFHVHEFKV (248 aa)) lie on the Extracellular side of the membrane. The N-linked (GlcNAc...) asparagine glycan is linked to Asn-51. Residues 163–286 (NGEGLQVLHY…KWSSTKWFHV (124 aa)) form the Fe2OG dioxygenase domain. Residues His-181 and Asp-183 each contribute to the Fe cation site. Asn-222 carries an N-linked (GlcNAc...) asparagine glycan. His-267 is a binding site for Fe cation. Residue Lys-277 coordinates 2-oxoglutarate.

Belongs to the P4HA family. Requires Fe(2+) as cofactor. It depends on L-ascorbate as a cofactor. Expressed in epidermal root hair cells (trichoblasts).

It localises to the endoplasmic reticulum membrane. The protein resides in the golgi apparatus membrane. It catalyses the reaction L-prolyl-[collagen] + 2-oxoglutarate + O2 = trans-4-hydroxy-L-prolyl-[collagen] + succinate + CO2. In terms of biological role, catalyzes the post-translational formation of 4-hydroxyproline in -Xaa-Pro-Gly- sequences in proline-rich peptide sequences of plant glycoproteins and other proteins. Hydroxyprolines are important constituent of many plant cell wall glycoproteins such as extensins, hydroxyproline-rich glycoproteins, lectins and arabinogalactan proteins. Possesses high affinity for leucine-rich repeat and proline-rich extensins of root cell walls that are essential for root hair development. Hydroxyprolines define the subsequent O-glycosylation sites by arabinosyltransferases which elongate the O-arabinosides on extensins. This chain is Prolyl 4-hydroxylase 5, found in Arabidopsis thaliana (Mouse-ear cress).